Reading from the N-terminus, the 362-residue chain is Oxygen-dependent coproporphyrinogen-III oxidase (362 aa).

The interval 12–31 (RQENDQSTPQLELPPTDSRD) is disordered. Serine 118 provides a ligand contact to substrate. Residues histidine 122 and histidine 132 each coordinate a divalent metal cation. Residue histidine 132 is the Proton donor of the active site. 134–136 (NYR) is a binding site for substrate. Positions 166 and 196 each coordinate a divalent metal cation. The important for dimerization stretch occupies residues 286–321 (YVEFNLVWDRGTIFGLQTNGRTESILMSLPPLVRWE).

It belongs to the aerobic coproporphyrinogen-III oxidase family. In terms of assembly, homodimer. It depends on a divalent metal cation as a cofactor.

It localises to the cytoplasm. The enzyme catalyses coproporphyrinogen III + O2 + 2 H(+) = protoporphyrinogen IX + 2 CO2 + 2 H2O. The protein operates within porphyrin-containing compound metabolism; protoporphyrin-IX biosynthesis; protoporphyrinogen-IX from coproporphyrinogen-III (O2 route): step 1/1. Its function is as follows. Involved in the heme and chlorophyll biosynthesis. Catalyzes the aerobic oxidative decarboxylation of propionate groups of rings A and B of coproporphyrinogen-III to yield the vinyl groups in protoporphyrinogen-IX. The chain is Oxygen-dependent coproporphyrinogen-III oxidase from Synechococcus sp. (strain CC9902).